The chain runs to 155 residues: Large ribosomal subunit protein bL9c (155 aa).

The protein belongs to the bacterial ribosomal protein bL9 family.

The protein localises to the plastid. It localises to the chloroplast. In terms of biological role, binds to the 23S rRNA. In Pyropia yezoensis (Susabi-nori), this protein is Large ribosomal subunit protein bL9c.